The following is a 5098-amino-acid chain: MSRFSCIFPTLTDGYVPNPDNTRAAGQRTYAIDLSRRNAPSSETESHILAAWGLVLYSYVGTDEVAFYVVPKSGPDTTALAELKVEGDMSRQALTHAAEQLFPTGSVGAGQVSGDTANTIIDFANDIESLFVTQTEESFLSLHVHGDEQGHVSLSLTYHLSLLTDLQAANVGTAMAQALAEVGKDDCDRLIKDLNLMSPTHLEHIWKFNANVPGTWEECFHDVIERHAANRPHSLAVDAWDTKLTYADLVREASLLAAYLQQRGVRPGSVVPISFERSGAALVAMLAVSKAGGAFVSVPPNLPAGRLDAILEVIEAPFVVTWSKYESFWAERLPTLPIDNYPKPSADAAVEALGKPEDLFYVIFTSGSTGRPKGCMLSHSNWLNGALRNAPSWKYGPESRVLQMLSHTFDMSLLEICTSLGSGACVCVPRTEEIETSVSDAINRWQVNHVIMTPSLARALRPDDVPGLKTMCLGGEAFPKEIVTMWSERINLWQFYGPSECSINSSSRAITRPDADPLNIGPPNSAACWVVDTQDYNKLVPVGAIGELLVSGPIVGMGYLKNPVKTAEAFLDQVGFVAKDDPQFGGFRFYRTGDLVRWNSDGTITFCGRADTQVKLNGQRLELAEVEYQLGLEAGVQYAIAMAPQTGRCKNNLIAILTVKGTSTSNQGNAAEISLLDRRDPIVQQTVKKLRSQLQHALPRYMVPTIWAFVGRMPMSPSGKIDRVQLRNWVQDMSQEAFDAITGRSFEAEDHVLGLSRLEQEIQLAWAEALGLSAAEVGVQQPFVALGGDSIKALDAVARCRARQIKISMVHILSCEGVREAASLAKVQETPAQQVAEMAVDYSDLWTRLSTDYELGKLGISQLEEVEDVFPCTTMQEGMFLGQIRRPGAYHMRFFHRVQLKGGCLPPVERIQQAWAALVERHPSLRTVFVDDLSPEAIYHSVVLRSVPMELTMREVPRDLNPEAALAMFTEELVPFRPNAPLHRMLLLTCRGRVPYFMLEISHVIMDGYALSVFRREFIQACSSTAPLPRGPDYRMFANYHRTRQTDESAKYWTDYLADCTGCHIPTHAEAAPTDVPPKWPRTLQRRDFGFDNSAAFLQRCKERQVTLACAIRAAWALVLRAYTQSQDVCFGYVSSGRNVPVPEVETIFGLCLSMQVCRAKLSEASTMARLARKIQEDYVASLPFQHYPLAEAQRGLKQTRGQGLFNTAISMEWVPPTAEDENALLDLEEIREQDDPTEYDIAISVDVHEGHIKLGFLYWPNLTDFEIAHLAEALQGALNCFAFQPDEALDSLTLLQASDFCSTLGDRSTMLPLEAVRGNVMSMIDGWVTRQPESAAIDGWDGSLSYKKLHEQSSWVAHNLLHQGVQPGDRVLVCADRSSRTVATILGLVRAGCVLVLSTPTDPEKRLQWLAQKCNAALVVADPAYEKRFATAGPRVLSTTSVCVPAAWDYEFPALDEQDLVSILFTSGSTGTPKGTLMDHGALATSVLLGHGRTLRFSRHTRMLHFASLTFDAALAEIFTTLAHGGCICVPCEEDRLSDVPGCISRFAVNTAMLTPSVGRLLDPGALPTLKALVMIGEPMSRLDVERFAPVLDLYNGAGPTETSIMVTIAGPMKPTDDPVNLGYPVTGVRLWVTEAENPNRLAPLGAVGELIVEGRLVTRGYLDDPSRTQEAFLTSLPWLPSQHALYRTGDLVRYADDGSLRYMGRKDTQVKLRGQRIELQEVEYHLRKILPQAQVVVEMVVPEGKMRAQASLVAFVSGLTAADVESSSACNFEESMPMSQIVFPRSALQTLEEALPRHMIPSVYYALDTIPLSINGKVDRRRLREMGAALLASSAAHKGAVDEMSEPVKWTAASELERTLSELWAATLELEAEAIHCDDSFFELGGDSVSAMKLVAMARDQFKLSLSVPQMFRYPTIRQLAAEFGEPAGQSASSASSTTEEGFTFSTPDDSSTNDGVDDDFLQLATAQLAQLAREKGKKVDIASLLKQLQGSSSSSKTPSGSSSSSSSSSRKKKSARVVSPVKVPAPVPVPFSLLDGGADVVEKVCVYAVDQCKIPHEDIEDIYPATALQEGMMALMARTPGVYTTTLTCELPEQVDFARLHAAWDKTAEAHPILRTRIILTDNNTAMQVVQRAKELPWDTYYLQDGDILPDLTSNMTLGSPLLRLAEIHRQDQPRMLMVAIHHALYDGWSMPLLKQAVEDVYHGRPLQSQPFTPFINYLNAGKPAAQAFWTAHLDSFAGGVFPTLPSIDHHVQLTERRTRSLTVPAALPGSQYTLATKIQTAWAVTVSRYAEAEDIVFGTVSTGRSAPVPAIDRMVGPTITTVPVRISLSDQAERVISLLQRVQEDGWNRMDHEHLGLQHIRRLGESCAATCSLQTLLVIQPREQPRAKSGSTLLAGLQDVAELEGVDTYPLMLVCEPDGASLHLTAMFDPAVLDEVMLGRMLAHWELILTQLWSEPDMAVMELDALSHSDRQTLVRWNAGERVADGCAHDAVHEWSVRTPHAPAVCAWDGEWTYEELEKCSSLIVRQILAHGVSSGDFVALYHEKSRWAAAGILAVFKAGGILVTLDPAHPKDRIKDIVYQARPRLILTSQSLLGEARELEVPVLSVSFAASQQTPEECSPLPIVSSTQAAYAPFTSGSTGRPKGIVLDHRGLAASTASVAHACLLRPASRVLHFASFAFDASMMEHLIAWHAGGCLCIPDETARQTDLASCIRDFEITWAFLTPSCLRLITPDDVQSLEALGLGGESMTSEDISIWGPRLRQIVQLYGPAECCIVAALTEVTKPSENRLIGRPNACRCWVVDPQNPDRLAPLGAVGELVIEGITVGWGYIDDPERTTQAFIRPPTWLQTLYPNSQQPGRLYRTGDLVRYAGADGKLTFIGRRDGQLKLHGQRIELADVEAHLRPLMPGTQKIVVEMVHSADNQHPLLAAFVEEPLASQNPSEQEVGLLHPSQTQCALDVKAIDSVLSRMVPQYMIPSMYLHISRLPLSASGKLNRRHLREIVAEFPRQRLNEYAAGSGLTVPDRPVTAQEREMQAIWARVLSLDPDTIGINEDFFRIGGDSISGMQVATKCNAAGMHITGADLFRHRTIEQLMRHLSATRKSGCASISLPAEPVGEWVALAPIQQLFFEIAPQGPNHFNQSLLLRTGRRVSVEELAGGLDILVERHSMLRARFCRDDSGQWSQQVRSLGSYPASAFYRLATHNQVAPQSLPTLLTASQLALSIQEGPLLAVDLVDLADGAQLVYLVAHHLIIDLVSWRILHGELEEYLQTGSLASATGSVSFLTWSRAQAEYSANHLTPTRALPDFQEANDGFDAPKYWGISSESNTFGQTSSSRFTLDRTVTDQLFGSANNVLDTRPVEILQAALWYSFTRSLTDRPGPSIYVEGHGREPWTESIDLSRTVGWFTTMSPLVSAPWDSLSRTRMRDFLDALSYIKDQRRRIPANGWAYFTSRYLNDEGKVAYGRMKSVVEIMFNYMGQYQEMNREDAILQLAGDDIQSGTGAADIAGNVPRFSLIDVSAFTANGCLTFEFIFPESMQQDARLKQWFKECERTLIVAASTLSTESPRKTLTDFPLMPALTYDQLNQCLDQTLPSMGLCARDVVNIYPCSSVQQGMLLAQLRDQQAYQQRLRFQVNSRGPTDRLTLERVKDAWTEVINRHDILRTLLLPVSDYNHLDQVVMAPGSLQHLVRMNAMDANPTQGLPHSINITSDSTGTVICEWNVSHALVDAMSIAVIQREVNQALQGSLGQHQNLPRYADYVQWLSLQDNTETQAYWQNYLEGVEPCLFPKLTSLPDKVNPEGTISAIRATWTRDARMHDLCQKHGITLTNLFHMIWALVLGAYVGTDEVCFGYTTLGRDVPVDGVEKMVGPLVNVVATIVQLQEDDSILNALLTHQTHLTNSLQHQHYALADLYASSGLVGSRLFNTIVSLQDMSHFDAPDEQPTWLEMLPANDVSEYDVALNIGVDQSSIQLVCSYRTLSLSAVQADALLRTASHVLSEMLRDPTQRFSELEVISPECKEQLMKWNAAMPAPTEEYIHEKIQGQCRLHASREAVCAWDGIFTYAEVDDLSSRLAARLIRMGVTSEHIIPIYAPKSRWTVIAILGVLKSGAAFTLLETSHPMARLQVICHEIKADMIIAPASHAGPAANLAPIIVGLDRITSMSPQTSDLLPTVGMPPAAEALAYLIFTSGSTGNPKGVMVTHQNLCSNASIMTTSVNMMSDSRVLQFASHAFDGCLWEILGPLFAGACLIIPSESESQEDLAGCIERMVVTWAFLTPSVARILKPETLPSLRVLTLGGEPIAASDLDMWRGHVQVVCAYGPTETTILASTTSPSTFPTDGRDIGVPTGSSLWIVDKRNYLKLAPLGATGELLIEGPNVSQGYLGDPEKTNEAFPVAPRWLSQLRQSPTRIYRTGDLVRFDTSTGTIRFVGRKDNQIKFHGQRIELGEIEHHAQQAFSNSSTVIVDLITPAQPQRPYIVAFVHQPDTKTATADPIDAILLPPSESFRAEALGAQNHMHKRLPHYMVPTVFLPLQWLPLSGTGKADRKRLRQCALALPSPDLDAYRATALMKRMPSTAAERKMQELVATVLGRGVSEIGMDDSFFYLGGDSVQAMRLVAEGRHQGLALSLRAIFDAPRLGDLAYRTTNLVKVNQPIQATSPVTLRDECNHIETIVATHPIKKTDVVDVLPTTSFQRHWLDIQLMSYIVVDIPGPIDPERLLTAMQRVVEAHPILRASFVPYEDTTMQVILRTRVAMTAADLSTTTVEDICRQDEDAPMILGTPYMRVILASQGDVGHKLIMRLSHAQYDAVSLSLLMNDLRHAYANETRPFPSSHSPPFTDYITYQQTLRADPTATTFWHSLLQDVPITCLNLQPAETSTSNGTPITRTRDINISPFPSLPNGITIATAVKAAWSLVLAQKTDSLAVIFGQVVHGRGIALPGVEGIVGPCANITPVVARLGRQTAGLELMQTLQDQHRSAMPYETVDLDDALAYSKDSQARRKGLQTIVQHQNNVVVDDMELSLGEVKCGVDVRAVDHVPREVWIYSSVDEKRPRILEVKIMSSTLVLNEEVAEELMDLLIEKIVGLFRDPEGVCV.

The interval 225–616 (ERHAANRPHS…CGRADTQVKL (392 aa)) is adenylation 1. Residues 756–829 (SRLEQEIQLA…EAASLAKVQE (74 aa)) form the Carrier 1 domain. O-(pantetheine 4'-phosphoryl)serine is present on Ser790. Residues 867-1298 (EDVFPCTTMQ…ALDSLTLLQA (432 aa)) form a condensation 1 region. The segment at 1326–1715 (DGWVTRQPES…GRKDTQVKLR (390 aa)) is adenylation 2. The 78-residue stretch at 1853–1930 (TAASELERTL…QLAAEFGEPA (78 aa)) folds into the Carrier 2 domain. Residue Ser1890 is modified to O-(pantetheine 4'-phosphoryl)serine. Disordered stretches follow at residues 1930 to 1960 (AGQS…DGVD) and 1993 to 2022 (GSSS…RVVS). 2 stretches are compositionally biased toward low complexity: residues 1933–1957 (SASS…STND) and 1993–2011 (GSSS…SSSS). Residues 2063 to 2478 (EDIYPATALQ…ALSHSDRQTL (416 aa)) form a condensation 2 region. Residues 2501-2893 (VRTPHAPAVC…IGRRDGQLKL (393 aa)) form an adenylation 3 region. The region spanning 3029–3105 (RPVTAQEREM…QLMRHLSATR (77 aa)) is the Carrier 3 domain. The residue at position 3066 (Ser3066) is an O-(pantetheine 4'-phosphoryl)serine. Condensation regions lie at residues 3122-3587 (WVAL…TYDQ) and 3608-4027 (NIYP…EQLM). The interval 4052-4442 (HASREAVCAW…VGRKDNQIKF (391 aa)) is adenylation 4. Positions 4576–4652 (MPSTAAERKM…DLAYRTTNLV (77 aa)) constitute a Carrier 4 domain. An O-(pantetheine 4'-phosphoryl)serine modification is found at Ser4613. The tract at residues 4689–5016 (DVLPTTSFQR…LQTIVQHQNN (328 aa)) is condensation 5.

This sequence belongs to the NRP synthetase family.

It functions in the pathway secondary metabolite biosynthesis. Its function is as follows. Nonribosomal peptide synthetase; part of the gene cluster that mediates the biosynthesis of malformins, cyclic pentapeptides with a disulfide bond between 2 consecutive cysteins, that show potential anti-tumor as well as antimalarial and antitrypanosomal properties. The nonribosomal peptide synthetase mlfA is responsible of the formation of the cyclic pentapeptide. The malformin biosynthesis clusters in malformin-producing fungi also contain enzymes involved in the formation of the disulfide bond between the two consecutive cysteins within malformins, in addition to additional tailoring enzymes such as methyltransferases or oxidoreductases. They are also composed of up to 4 major facilitator superfamily transporters, and transcription factors probably involved in the regulation of the expression of those clusters. This chain is Malformin synthetase mlfA, found in Aspergillus homomorphus (strain CBS 101889).